The primary structure comprises 357 residues: bZIP transcription factor 23 (357 aa).

The tract at residues 166–185 (PPVPPAPTPTAAAVPPPPPP) is disordered. The region spanning 275–338 (VERRQRRMIK…KNEVLERMSR (64 aa)) is the bZIP domain. Positions 277–296 (RRQRRMIKNRESAARSRQRK) are basic motif. The tract at residues 303–317 (LEAEVAKLKELNDEL) is leucine-zipper.

The protein belongs to the bZIP family. ABI5 subfamily. As to expression, highly expressed in leaves.

It is found in the nucleus. Transcriptional activator that mediates abscisic acid (ABA) signaling. Can regulate the expression of a wide spectrum of stress-related genes in response to abiotic stresses through an ABA-dependent regulation pathway. Confers ABA-dependent drought and salinity tolerance. Binds specifically to the ABA-responsive elements (ABRE) in the promoter of target genes to mediate stress-responsive ABA signaling. The protein is bZIP transcription factor 23 of Oryza sativa subsp. japonica (Rice).